A 417-amino-acid polypeptide reads, in one-letter code: Imidazolonepropionase (417 aa).

Positions 80 and 82 each coordinate Fe(3+). Zn(2+)-binding residues include H80 and H82. Residues R89, Y152, and H187 each contribute to the 4-imidazolone-5-propanoate site. Y152 is a binding site for N-formimidoyl-L-glutamate. H252 serves as a coordination point for Fe(3+). H252 provides a ligand contact to Zn(2+). E255 contributes to the 4-imidazolone-5-propanoate binding site. Residue D326 participates in Fe(3+) binding. Residue D326 coordinates Zn(2+). Residues N328 and G330 each coordinate N-formimidoyl-L-glutamate. S331 contacts 4-imidazolone-5-propanoate.

This sequence belongs to the metallo-dependent hydrolases superfamily. HutI family. Zn(2+) serves as cofactor. The cofactor is Fe(3+).

The protein localises to the cytoplasm. It carries out the reaction 4-imidazolone-5-propanoate + H2O = N-formimidoyl-L-glutamate. It participates in amino-acid degradation; L-histidine degradation into L-glutamate; N-formimidoyl-L-glutamate from L-histidine: step 3/3. In terms of biological role, catalyzes the hydrolytic cleavage of the carbon-nitrogen bond in imidazolone-5-propanoate to yield N-formimidoyl-L-glutamate. It is the third step in the universal histidine degradation pathway. This chain is Imidazolonepropionase, found in Bacteroides fragilis (strain ATCC 25285 / DSM 2151 / CCUG 4856 / JCM 11019 / LMG 10263 / NCTC 9343 / Onslow / VPI 2553 / EN-2).